The following is a 213-amino-acid chain: Holliday junction resolvase RecU (213 aa).

Mg(2+) is bound by residues T98, D100, E113, and Q132.

It belongs to the RecU family. Mg(2+) is required as a cofactor.

The protein resides in the cytoplasm. The enzyme catalyses Endonucleolytic cleavage at a junction such as a reciprocal single-stranded crossover between two homologous DNA duplexes (Holliday junction).. Functionally, endonuclease that resolves Holliday junction intermediates in genetic recombination. Cleaves mobile four-strand junctions by introducing symmetrical nicks in paired strands. Promotes annealing of linear ssDNA with homologous dsDNA. Required for DNA repair, homologous recombination and chromosome segregation. In Ligilactobacillus salivarius (strain UCC118) (Lactobacillus salivarius), this protein is Holliday junction resolvase RecU.